Consider the following 129-residue polypeptide: UPF0325 protein YPTS_3127 (129 aa).

It belongs to the UPF0325 family.

This chain is UPF0325 protein YPTS_3127, found in Yersinia pseudotuberculosis serotype IB (strain PB1/+).